The sequence spans 615 residues: ABC transporter G family member 22 (615 aa).

An ABC transporter domain is found at 31–279; sequence ITFKDLAYSV…EIGFPFPDQT (249 aa). Residue 67 to 74 coordinates ATP; the sequence is GPSGSGKT. Residues 364–610 enclose the ABC transmembrane type-2 domain; that stretch reads SNCLVRFAVA…TMVFLCLHYF (247 aa). The next 6 membrane-spanning stretches (helical) occupy residues 370–390, 400–420, 442–462, 477–497, 508–528, and 587–607; these read FAVA…LGMD, VLFY…SLFI, LALM…LGTI, FFAM…MLII, FAVG…FVPI, and INLI…FLCL.

It belongs to the ABC transporter superfamily. ABCG family. Eye pigment precursor importer (TC 3.A.1.204) subfamily.

It localises to the membrane. May be involved in cell migration. In Dictyostelium discoideum (Social amoeba), this protein is ABC transporter G family member 22 (abcG22).